The chain runs to 647 residues: UvrABC system protein C (647 aa).

The 80-residue stretch at 16–95 (VEPGVYRFRD…IKEFDPRFNV (80 aa)) folds into the GIY-YIG domain. Residues 208–243 (DRYARELEQQMNAAAENLDFERAARLRDDRSALKRA) enclose the UVR domain.

This sequence belongs to the UvrC family. In terms of assembly, interacts with UvrB in an incision complex.

It is found in the cytoplasm. Functionally, the UvrABC repair system catalyzes the recognition and processing of DNA lesions. UvrC both incises the 5' and 3' sides of the lesion. The N-terminal half is responsible for the 3' incision and the C-terminal half is responsible for the 5' incision. The sequence is that of UvrABC system protein C from Mycobacterium marinum (strain ATCC BAA-535 / M).